Consider the following 1000-residue polypeptide: uncharacterized protein (1000 aa).

Basic and acidic residues predominate over residues 787–809; that stretch reads RQYEKLKRQRAKSETERHQERHG. Residues 787 to 812 are disordered; sequence RQYEKLKRQRAKSETERHQERHGKLS.

This is an uncharacterized protein from Picosynechococcus sp. (strain ATCC 27264 / PCC 7002 / PR-6) (Agmenellum quadruplicatum).